The following is a 190-amino-acid chain: Elongation factor P-like protein (190 aa).

It belongs to the elongation factor P family.

This Salmonella gallinarum (strain 287/91 / NCTC 13346) protein is Elongation factor P-like protein.